Here is a 275-residue protein sequence, read N- to C-terminus: Probable histone chaperone asf-1 (275 aa).

Composition is skewed to acidic residues over residues 157-166, 183-207, and 230-247; these read EDPVAEPVED, DGQE…EVDL, and KMED…DDEP. Residues 157 to 275 form a disordered region; that stretch reads EDPVAEPVED…SDKTNNEMVQ (119 aa). A compositionally biased stretch (basic and acidic residues) spans 265-275; sequence LSDKTNNEMVQ.

It belongs to the ASF1 family. Interacts with histone H3 and histone H4.

The protein localises to the nucleus. Functionally, histone chaperone that facilitates histone deposition and histone exchange and removal during nucleosome assembly and disassembly. This Caenorhabditis elegans protein is Probable histone chaperone asf-1.